The primary structure comprises 147 residues: D-aminoacyl-tRNA deacylase (147 aa).

The Gly-cisPro motif, important for rejection of L-amino acids signature appears at 136–137 (GP).

Belongs to the DTD family. In terms of assembly, homodimer.

The protein localises to the cytoplasm. It catalyses the reaction glycyl-tRNA(Ala) + H2O = tRNA(Ala) + glycine + H(+). It carries out the reaction a D-aminoacyl-tRNA + H2O = a tRNA + a D-alpha-amino acid + H(+). An aminoacyl-tRNA editing enzyme that deacylates mischarged D-aminoacyl-tRNAs. Also deacylates mischarged glycyl-tRNA(Ala), protecting cells against glycine mischarging by AlaRS. Acts via tRNA-based rather than protein-based catalysis; rejects L-amino acids rather than detecting D-amino acids in the active site. By recycling D-aminoacyl-tRNA to D-amino acids and free tRNA molecules, this enzyme counteracts the toxicity associated with the formation of D-aminoacyl-tRNA entities in vivo and helps enforce protein L-homochirality. The polypeptide is D-aminoacyl-tRNA deacylase (Streptococcus equi subsp. zooepidemicus (strain H70)).